We begin with the raw amino-acid sequence, 331 residues long: Putative mitochondrial 2-oxoglutarate/malate carrier protein (331 aa).

Solcar repeat units lie at residues 39–128, 140–231, and 239–329; these read VRAA…FMSR, VGFK…AKAQ, and SSKV…LGWL. 6 helical membrane-spanning segments follow: residues 42–62, 103–121, 148–168, 199–219, 245–265, and 309–329; these read ALPF…IQPI, GLSA…RIGC, AGLA…LALI, GVAA…ALNF, LSAS…FDFV, and YVRI…LGWL.

The protein belongs to the mitochondrial carrier (TC 2.A.29) family.

The protein localises to the mitochondrion inner membrane. Catalyzes the transport of 2-oxoglutarate across the inner mitochondrial membrane. This is Putative mitochondrial 2-oxoglutarate/malate carrier protein (mic-33) from Neurospora crassa (strain ATCC 24698 / 74-OR23-1A / CBS 708.71 / DSM 1257 / FGSC 987).